A 166-amino-acid chain; its full sequence is NADH-ubiquinone oxidoreductase chain 6 (166 aa).

6 consecutive transmembrane segments (helical) span residues 4–24 (FFSL…VVSA), 27–47 (QGVV…VFLG), 50–70 (FAAL…FGYC), 82–102 (VGGT…LLCL), 109–129 (LLVY…VGVF), and 135–155 (WGLI…LVIL).

It belongs to the complex I subunit 6 family.

It is found in the mitochondrion membrane. The enzyme catalyses a ubiquinone + NADH + 5 H(+)(in) = a ubiquinol + NAD(+) + 4 H(+)(out). Its function is as follows. Core subunit of the mitochondrial membrane respiratory chain NADH dehydrogenase (Complex I) that is believed to belong to the minimal assembly required for catalysis. Complex I functions in the transfer of electrons from NADH to the respiratory chain. The immediate electron acceptor for the enzyme is believed to be ubiquinone. This Lycodon semicarinatus (Ryukyu odd-tooth snake) protein is NADH-ubiquinone oxidoreductase chain 6 (MT-ND6).